The sequence spans 238 residues: Purine nucleoside phosphorylase DeoD-type (238 aa).

Residue His4 coordinates a purine D-ribonucleoside. Phosphate-binding positions include Gly20, Arg24, Arg43, and 87-90 (RVGS). A purine D-ribonucleoside is bound by residues 179 to 181 (EME) and 203 to 204 (SD). Asp204 functions as the Proton donor in the catalytic mechanism.

The protein belongs to the PNP/UDP phosphorylase family. As to quaternary structure, homohexamer; trimer of homodimers.

It catalyses the reaction a purine D-ribonucleoside + phosphate = a purine nucleobase + alpha-D-ribose 1-phosphate. The catalysed reaction is a purine 2'-deoxy-D-ribonucleoside + phosphate = a purine nucleobase + 2-deoxy-alpha-D-ribose 1-phosphate. Its function is as follows. Catalyzes the reversible phosphorolytic breakdown of the N-glycosidic bond in the beta-(deoxy)ribonucleoside molecules, with the formation of the corresponding free purine bases and pentose-1-phosphate. The chain is Purine nucleoside phosphorylase DeoD-type from Haemophilus influenzae (strain 86-028NP).